The following is a 611-amino-acid chain: Chaperone protein HtpG (611 aa).

The tract at residues 1–326 (MSETLERHAF…TEDLPLNVSR (326 aa)) is a; substrate-binding. The segment at 327–536 (EMLQATPVLA…SGGPDLQMQR (210 aa)) is b. Positions 537-611 (LLRRAGRGFG…RVATALAAQG (75 aa)) are c.

Belongs to the heat shock protein 90 family. Homodimer.

The protein resides in the cytoplasm. Functionally, molecular chaperone. Has ATPase activity. In Methylobacterium nodulans (strain LMG 21967 / CNCM I-2342 / ORS 2060), this protein is Chaperone protein HtpG.